We begin with the raw amino-acid sequence, 146 residues long: Zinc metalloproteinase-disintegrin salmosin-3 (146 aa).

One can recognise a Peptidase M12B domain in the interval 1–57 (SCPCDANSCIMSATLSNEPSSRFSDCSFSLPSRFSDCSFNQYSSDIIHYHECLLNEP). Disulfide bonds link Cys-2–Cys-37, Cys-4–Cys-9, Cys-68–Cys-87, Cys-79–Cys-97, Cys-81–Cys-92, Cys-91–Cys-114, Cys-105–Cys-111, Cys-110–Cys-135, and Cys-123–Cys-142. The Disintegrin domain maps to 65–146 (PPVCGNYYPE…GQSGVCPRNT (82 aa)). A Cell attachment site motif is present at residues 127–129 (RGD).

This sequence belongs to the venom metalloproteinase (M12B) family. P-II subfamily. P-IIb sub-subfamily. As to quaternary structure, monomer (disintegrin). It depends on Zn(2+) as a cofactor. In terms of tissue distribution, expressed by the venom gland.

It is found in the secreted. Functionally, snake venom zinc metalloproteinase that inhibits ADP-induced platelet aggregation (probably by binding integrin alpha-IIb/beta-3 (ITGA2B/ITGB3)) and degrades fibrinogen. The protein is Zinc metalloproteinase-disintegrin salmosin-3 of Gloydius brevicauda (Korean slamosa snake).